The following is a 329-amino-acid chain: GTP 3',8-cyclase (329 aa).

Residues 8–229 enclose the Radical SAM core domain; the sequence is AFARTFYYLR…AGWQRRLPGR (222 aa). Arginine 17 serves as a coordination point for GTP. Residues cysteine 24 and cysteine 28 each coordinate [4Fe-4S] cluster. S-adenosyl-L-methionine is bound at residue tyrosine 30. Cysteine 31 contributes to the [4Fe-4S] cluster binding site. Arginine 68 provides a ligand contact to GTP. Residue glycine 72 coordinates S-adenosyl-L-methionine. Position 99 (threonine 99) interacts with GTP. Serine 123 provides a ligand contact to S-adenosyl-L-methionine. Position 160 (lysine 160) interacts with GTP. Position 194 (methionine 194) interacts with S-adenosyl-L-methionine. [4Fe-4S] cluster is bound by residues cysteine 257 and cysteine 260. 262-264 is a binding site for GTP; that stretch reads RLR. Cysteine 274 contacts [4Fe-4S] cluster.

Belongs to the radical SAM superfamily. MoaA family. As to quaternary structure, monomer and homodimer. [4Fe-4S] cluster serves as cofactor.

It carries out the reaction GTP + AH2 + S-adenosyl-L-methionine = (8S)-3',8-cyclo-7,8-dihydroguanosine 5'-triphosphate + 5'-deoxyadenosine + L-methionine + A + H(+). The protein operates within cofactor biosynthesis; molybdopterin biosynthesis. Functionally, catalyzes the cyclization of GTP to (8S)-3',8-cyclo-7,8-dihydroguanosine 5'-triphosphate. This chain is GTP 3',8-cyclase, found in Edwardsiella ictaluri (strain 93-146).